Reading from the N-terminus, the 672-residue chain is Acetyl-coenzyme A synthetase (672 aa).

CoA contacts are provided by residues 205 to 208 (RGGK) and Thr-325. Residues 401-403 (GEP), 425-430 (DTYWQT), Asp-516, and Arg-531 contribute to the ATP site. Residue Ser-539 participates in CoA binding. ATP is bound at residue Arg-542. Residue Arg-600 participates in CoA binding.

It belongs to the ATP-dependent AMP-binding enzyme family.

The enzyme catalyses acetate + ATP + CoA = acetyl-CoA + AMP + diphosphate. In Phycomyces blakesleeanus (strain ATCC 8743b / DSM 1359 / FGSC 10004 / NBRC 33097 / NRRL 1555), this protein is Acetyl-coenzyme A synthetase (facA).